The sequence spans 252 residues: Probable transcriptional regulatory protein Moth_1704 (252 aa).

The protein belongs to the TACO1 family.

It is found in the cytoplasm. This Moorella thermoacetica (strain ATCC 39073 / JCM 9320) protein is Probable transcriptional regulatory protein Moth_1704.